Reading from the N-terminus, the 129-residue chain is UPF0212 protein Mbar_A2902 (129 aa).

This sequence belongs to the UPF0212 family.

The polypeptide is UPF0212 protein Mbar_A2902 (Methanosarcina barkeri (strain Fusaro / DSM 804)).